The chain runs to 59 residues: Large ribosomal subunit protein uL30 (59 aa).

This sequence belongs to the universal ribosomal protein uL30 family. As to quaternary structure, part of the 50S ribosomal subunit.

This Yersinia pseudotuberculosis serotype I (strain IP32953) protein is Large ribosomal subunit protein uL30.